Consider the following 376-residue polypeptide: Cytochrome b (376 aa).

4 consecutive transmembrane segments (helical) span residues 28–48 (YGFLLGIIFFIQIITGVFLAS), 72–94 (WCFRYMHATGASLVFLLTYLHIL), 107–127 (SWISGLILFMIFIVTAFVGYV), and 169–189 (FFVLHFILPFIGLCIVFIHIF). Positions 78 and 92 each coordinate heme b. His173 and His187 together coordinate heme b. Residue His192 participates in a ubiquinone binding. A run of 4 helical transmembrane segments spans residues 214 to 234 (LLSLDVKGFNNVIILFLIQSL), 274 to 294 (VPSKPAGLVIVLLSLQLLFLL), 317 to 337 (VPIIWFMCAFYALLWIGCQLP), and 340 to 360 (IFILYGRLFIVLFFCSGLFVL).

Belongs to the cytochrome b family. In terms of assembly, the main subunits of complex b-c1 are: cytochrome b, cytochrome c1 and the Rieske protein. It depends on heme b as a cofactor.

The protein resides in the mitochondrion inner membrane. Its function is as follows. Component of the ubiquinol-cytochrome c reductase complex (complex III or cytochrome b-c1 complex) that is part of the mitochondrial respiratory chain. The b-c1 complex mediates electron transfer from ubiquinol to cytochrome c. Contributes to the generation of a proton gradient across the mitochondrial membrane that is then used for ATP synthesis. This chain is Cytochrome b (MT-CYB), found in Plasmodium falciparum.